A 128-amino-acid polypeptide reads, in one-letter code: Phosphoribosyl-AMP cyclohydrolase (128 aa).

Asp79 contributes to the Mg(2+) binding site. Zn(2+) is bound at residue Cys80. The Mg(2+) site is built by Asp81 and Asp83. Zn(2+) contacts are provided by Cys97 and Cys104.

It belongs to the PRA-CH family. In terms of assembly, homodimer. Mg(2+) serves as cofactor. Requires Zn(2+) as cofactor.

It localises to the cytoplasm. The enzyme catalyses 1-(5-phospho-beta-D-ribosyl)-5'-AMP + H2O = 1-(5-phospho-beta-D-ribosyl)-5-[(5-phospho-beta-D-ribosylamino)methylideneamino]imidazole-4-carboxamide. Its pathway is amino-acid biosynthesis; L-histidine biosynthesis; L-histidine from 5-phospho-alpha-D-ribose 1-diphosphate: step 3/9. In terms of biological role, catalyzes the hydrolysis of the adenine ring of phosphoribosyl-AMP. The protein is Phosphoribosyl-AMP cyclohydrolase of Saccharophagus degradans (strain 2-40 / ATCC 43961 / DSM 17024).